The sequence spans 297 residues: MEINGVEIEDTYAEAFPIKIARVLITAATKRWAQVAATEATGFATSVIMCPAEAGIEKFASPSETPDGRPGVYVQICTFKYEALEEQLLERIGQCVLTAPTTAVFNGLPDAEKQFNIGFKLKFFGDGMESEAQVAGRKVYKVPIMEGDFVTEENIGAIAGIAGGNFFIFGDSQMSALTAAEAAVDAIEELEGTIAPFPGGIVASGSKSGANKYKFLKATANEKFCPSIKDKVENTEVPADVNAIYEIVINGLDEASIKAAMKAGIEAAVTVPGIKKISAGNYGGKLGKYQFKLHELF.

Belongs to the FTR family. As to quaternary structure, homotetramer.

The protein localises to the cytoplasm. It carries out the reaction N-formylmethanofuran + 5,6,7,8-tetrahydromethanopterin + H(+) = N(5)-formyl-5,6,7,8-tetrahydromethanopterin + methanofuran. Its pathway is one-carbon metabolism; methanogenesis from CO(2); 5,10-methenyl-5,6,7,8-tetrahydromethanopterin from CO(2): step 2/3. Functionally, catalyzes the reversible transfer of a formyl group from formylmethanofuran (formyl-MFR) to tetrahydromethanopterin (H(4)MPT) to produce 5-formyl tetrahydromethanopterin (5-formyl-H(4)MPT) and methanofuran (MFR). The sequence is that of Formylmethanofuran--tetrahydromethanopterin formyltransferase from Methanosarcina acetivorans (strain ATCC 35395 / DSM 2834 / JCM 12185 / C2A).